The sequence spans 1010 residues: Trifunctional purine biosynthetic protein adenosine-3 (1010 aa).

Ala-2 is subject to N-acetylalanine. At Ser-10 the chain carries Phosphoserine. One can recognise an ATP-grasp domain in the interval 111-318 (KEFMDRHEIP…LYEVMQSTLD (208 aa)). ATP-binding positions include 190 to 193 (EEFL), Glu-197, Arg-220, and Asn-229. 2 residues coordinate Mg(2+): Glu-288 and Asn-290. Residue Lys-350 is modified to N6-acetyllysine. The interval 434 to 809 (GLTYKDSGVD…NFPVQQKKAR (376 aa)) is AIRS domain. A phosphoserine mark is found at Ser-440 and Ser-467. Residue Thr-682 is modified to Phosphothreonine. Residues 810–1010 (VAVLISGTGS…DGKIHWAKEQ (201 aa)) are GART domain. Residue 818-820 (GSN) coordinates N(1)-(5-phospho-beta-D-ribosyl)glycinamide. Residues Arg-871, 896–899 (MRIL), and Asn-913 each bind (6R)-10-formyltetrahydrofolate. The active-site Proton donor is the His-915. 947–951 (AEDVD) provides a ligand contact to (6R)-10-formyltetrahydrofolate. 977 to 980 (KVAE) is a binding site for N(1)-(5-phospho-beta-D-ribosyl)glycinamide.

This sequence in the N-terminal section; belongs to the GARS family. In the central section; belongs to the AIR synthase family. The protein in the C-terminal section; belongs to the GART family. As to quaternary structure, homodimer. Requires Mg(2+) as cofactor. Mn(2+) serves as cofactor. Detected in liver, kidney and brain.

The catalysed reaction is 5-phospho-beta-D-ribosylamine + glycine + ATP = N(1)-(5-phospho-beta-D-ribosyl)glycinamide + ADP + phosphate + H(+). It carries out the reaction 2-formamido-N(1)-(5-O-phospho-beta-D-ribosyl)acetamidine + ATP = 5-amino-1-(5-phospho-beta-D-ribosyl)imidazole + ADP + phosphate + H(+). The enzyme catalyses N(1)-(5-phospho-beta-D-ribosyl)glycinamide + (6R)-10-formyltetrahydrofolate = N(2)-formyl-N(1)-(5-phospho-beta-D-ribosyl)glycinamide + (6S)-5,6,7,8-tetrahydrofolate + H(+). It participates in purine metabolism; IMP biosynthesis via de novo pathway; 5-amino-1-(5-phospho-D-ribosyl)imidazole from N(2)-formyl-N(1)-(5-phospho-D-ribosyl)glycinamide: step 2/2. Its pathway is purine metabolism; IMP biosynthesis via de novo pathway; N(1)-(5-phospho-D-ribosyl)glycinamide from 5-phospho-alpha-D-ribose 1-diphosphate: step 2/2. It functions in the pathway purine metabolism; IMP biosynthesis via de novo pathway; N(2)-formyl-N(1)-(5-phospho-D-ribosyl)glycinamide from N(1)-(5-phospho-D-ribosyl)glycinamide (10-formyl THF route): step 1/1. Functionally, trifunctional enzyme that catalyzes three distinct reactions as part of the 'de novo' inosine monophosphate biosynthetic pathway. The protein is Trifunctional purine biosynthetic protein adenosine-3 (Gart) of Mus musculus (Mouse).